The chain runs to 45 residues: Natriuretic peptide OsNP-d (45 aa).

A propeptide spanning residues 1–5 (PAAGL) is cleaved from the precursor. Residues cysteine 14 and cysteine 30 are joined by a disulfide bond.

The protein belongs to the natriuretic peptide family. In terms of tissue distribution, expressed by the venom gland.

It localises to the secreted. Snake venom natriuretic peptide that targets both NPR1 and NPR2. Exhibits hypotensive and vasodepressor activities. In Oxyuranus scutellatus scutellatus (Australian taipan), this protein is Natriuretic peptide OsNP-d.